The chain runs to 81 residues: uncharacterized protein (81 aa).

The N-terminal stretch at 1–31 (MRYNSFLSVLALFNVLLWFTFILAISMTFSA) is a signal peptide. A helical transmembrane segment spans residues 52 to 74 (WFFVLLPYVIGLFFAIFDSATIG).

It is found in the membrane. This is an uncharacterized protein from Pasteurella multocida (strain Pm70).